Consider the following 851-residue polypeptide: Transforming growth factor beta receptor type 3 (851 aa).

The first 20 residues, 1–20 (MTSHYVIAIFALMSSCLATA), serve as a signal peptide directing secretion. Over 21 to 787 (GPEPGALCEL…IFHGLDTLTV (767 aa)) the chain is Extracellular. Cys52 and Cys197 are joined by a disulfide. 2 N-linked (GlcNAc...) asparagine glycosylation sites follow: Asn141 and Asn492. Positions 455–730 (KCDNEKMIVA…PKCVPPDEAC (276 aa)) constitute a ZP domain. Residues Ser534 and Ser545 are each glycosylated (O-linked (Xyl...) (glycosaminoglycan) serine). N-linked (GlcNAc...) asparagine glycosylation is found at Asn571, Asn590, and Asn697. Cystine bridges form between Cys639/Cys705, Cys660/Cys730, and Cys710/Cys723. An interaction with TGF-beta ligand region spans residues 737-751 (IIWAMMQNKKTFTKP). A helical transmembrane segment spans residues 788–809 (MGIAFAAFVIGALLTGALWYIY). Over 810–851 (SHTGETAGRQQVPTSPPASENSSAAHSIGSTQSTPCSSSSTA) the chain is Cytoplasmic. The segment at 816-851 (AGRQQVPTSPPASENSSAAHSIGSTQSTPCSSSSTA) is disordered. Polar residues predominate over residues 817 to 834 (GRQQVPTSPPASENSSAA). Positions 836-851 (SIGSTQSTPCSSSSTA) are enriched in low complexity. At Thr840 the chain carries Phosphothreonine.

Forms homodimers and homooligomers. Interacts with DYNLT4. Interacts with integrin ITGA5:ITGB1; this interaction promotes the internalization and trafficking of ITGA5:ITGB1 into endocytic vesicles. Interacts with TGFB1, BMP2, BMP5, BMP7 or GDF5 and inhibin A via the ligand binding domains. Interacts with ALK3/BMPR1A; this interaction results in the cell surface retention of BMPR1A. Interacts with ALK6/BMPR1B; this interaction enhances BMPR1B-mediated stimulation of the BMP signaling pathway. Interacts with the scaffolding protein beta-arrestin2/ARRB2; this interaction mediates internalization of TGFBR3 and thus regulates migration, actin cytoskeleton and activation of CDC42. In terms of assembly, (Microbial infection) Interacts with human cytomegalovirus trimer complex composed of gH, gL, and gO; these interactions may promote HCMV cell entry in specific cell types. In terms of processing, extensively modified by glycosaminoglycan groups (GAG). Post-translationally, phosphorylated in the cytoplasmic domain by the type II receptor TGFBR2 at THR-840 to mediate recruitment of ARRB2 and subsequent internalization of TGFBR2 and TGFBR3.

The protein localises to the cell membrane. It is found in the secreted. Its subcellular location is the extracellular space. It localises to the extracellular matrix. Its function is as follows. Cell surface receptor that regulates diverse cellular processes including cell proliferation, differentiation, migration, and apoptosis. Initiates BMP, inhibin, and TGF-beta signaling pathways by interacting with different ligands including TGFB1, BMP2, BMP5, BMP7 or GDF5. Alternatively, acts as a cell surface coreceptor for BMP ligands, serving to enhance ligand binding by differentially regulating BMPR1A/ALK3 and BMPR1B/ALK6 receptor trafficking. Promotes epithelial cell adhesion, focal adhesion formation and integrin signaling during epithelial cell spreading on fibronectin. By interacting with the scaffolding protein beta-arrestin2/ARRB2, regulates migration or actin cytoskeleton and promotes the activation of CDC42 as well as the inhibition of NF-kappa-B. In gonadotrope cells, acts as an inhibin A coreceptor and regulates follicle-stimulating hormone (FSH) levels and female fertility. Plays a role in the inhibition of directed and random cell migration in epithelial cells by altering the actin cytoskeletal organization. Participates in epithelial-mesenchymal transformation (EMT) upon binding to BMP2 or TGFB2, by activating the PAR6/SMURF1/RHOA pathway. (Microbial infection) May act as a receptor for human cytomegalovirus in different cell types by interacting with HCMV trimer composed of GO, GH and GL. The sequence is that of Transforming growth factor beta receptor type 3 from Homo sapiens (Human).